The primary structure comprises 387 residues: Succinate--CoA ligase [ADP-forming] subunit beta (387 aa).

ATP contacts are provided by residues lysine 46, 53-55 (GRG), glutamate 99, alanine 102, and glutamate 107. Mg(2+) is bound by residues asparagine 199 and aspartate 213. Substrate-binding positions include asparagine 264 and 321–323 (GIV).

The protein belongs to the succinate/malate CoA ligase beta subunit family. As to quaternary structure, heterotetramer of two alpha and two beta subunits. Mg(2+) serves as cofactor.

It carries out the reaction succinate + ATP + CoA = succinyl-CoA + ADP + phosphate. It catalyses the reaction GTP + succinate + CoA = succinyl-CoA + GDP + phosphate. It functions in the pathway carbohydrate metabolism; tricarboxylic acid cycle; succinate from succinyl-CoA (ligase route): step 1/1. Its function is as follows. Succinyl-CoA synthetase functions in the citric acid cycle (TCA), coupling the hydrolysis of succinyl-CoA to the synthesis of either ATP or GTP and thus represents the only step of substrate-level phosphorylation in the TCA. The beta subunit provides nucleotide specificity of the enzyme and binds the substrate succinate, while the binding sites for coenzyme A and phosphate are found in the alpha subunit. This chain is Succinate--CoA ligase [ADP-forming] subunit beta, found in Campylobacter jejuni (strain RM1221).